Consider the following 248-residue polypeptide: Ubiquinone/menaquinone biosynthesis C-methyltransferase UbiE (248 aa).

The S-adenosyl-L-methionine site is built by Ser68 and Asp92.

This sequence belongs to the class I-like SAM-binding methyltransferase superfamily. MenG/UbiE family.

The catalysed reaction is a 2-demethylmenaquinol + S-adenosyl-L-methionine = a menaquinol + S-adenosyl-L-homocysteine + H(+). It carries out the reaction a 2-methoxy-6-(all-trans-polyprenyl)benzene-1,4-diol + S-adenosyl-L-methionine = a 5-methoxy-2-methyl-3-(all-trans-polyprenyl)benzene-1,4-diol + S-adenosyl-L-homocysteine + H(+). It functions in the pathway quinol/quinone metabolism; menaquinone biosynthesis; menaquinol from 1,4-dihydroxy-2-naphthoate: step 2/2. The protein operates within cofactor biosynthesis; ubiquinone biosynthesis. Methyltransferase required for the conversion of demethylmenaquinol (DMKH2) to menaquinol (MKH2) and the conversion of 2-polyprenyl-6-methoxy-1,4-benzoquinol (DDMQH2) to 2-polyprenyl-3-methyl-6-methoxy-1,4-benzoquinol (DMQH2). This chain is Ubiquinone/menaquinone biosynthesis C-methyltransferase UbiE, found in Rickettsia massiliae (strain Mtu5).